We begin with the raw amino-acid sequence, 292 residues long: Ribosomal RNA small subunit methyltransferase H (292 aa).

Residues 32-34 (GGH), D51, L87, D101, and Q108 each bind S-adenosyl-L-methionine.

This sequence belongs to the methyltransferase superfamily. RsmH family.

The protein resides in the cytoplasm. It carries out the reaction cytidine(1402) in 16S rRNA + S-adenosyl-L-methionine = N(4)-methylcytidine(1402) in 16S rRNA + S-adenosyl-L-homocysteine + H(+). Its function is as follows. Specifically methylates the N4 position of cytidine in position 1402 (C1402) of 16S rRNA. The sequence is that of Ribosomal RNA small subunit methyltransferase H from Pseudothermotoga lettingae (strain ATCC BAA-301 / DSM 14385 / NBRC 107922 / TMO) (Thermotoga lettingae).